Reading from the N-terminus, the 1202-residue chain is CHD3-type chromatin-remodeling factor CHR7 (1202 aa).

Chromo domains are found at residues 45–109 (GEIE…HPHL) and 142–201 (KTVD…RDKY). The 169-residue stretch at 237 to 405 (RYSWSKKTNV…FALMHFLDAD (169 aa)) folds into the Helicase ATP-binding domain. Residue 250–257 (DEMGLGKT) coordinates ATP. Residues 356–359 (DEGH) carry the DEAH box motif. Positions 528–679 (LLDKMMVKLK…HLVVGKQHLC (152 aa)) constitute a Helicase C-terminal domain. The disordered stretch occupies residues 838 to 872 (TSDEEEEADEPEAARQRKPRTVTRPYRKRARDNSE). Positions 853–867 (QRKPRTVTRPYRKRA) are enriched in basic residues.

This sequence belongs to the SNF2/RAD54 helicase family.

Its subcellular location is the nucleus. Its function is as follows. Chromatin remodeling factor that represses the expression of embryonic trait genes upon and after seed germination and thus enables the developmental switch to post-germinative growth. The protein is CHD3-type chromatin-remodeling factor CHR7 of Arabidopsis thaliana (Mouse-ear cress).